The primary structure comprises 387 residues: Chaperone protein DnaJ (387 aa).

The 65-residue stretch at 6–70 (DYYETLGVSR…QKRAAYDQYG (65 aa)) folds into the J domain. A CR-type zinc finger spans residues 143 to 225 (GKDTKISYDR…CHGTGHEQER (83 aa)). 8 residues coordinate Zn(2+): Cys-156, Cys-159, Cys-173, Cys-176, Cys-199, Cys-202, Cys-213, and Cys-216. CXXCXGXG motif repeat units follow at residues 156 to 163 (CHTCNGSG), 173 to 180 (CHKCHGSG), 199 to 206 (CDVCGGTG), and 213 to 220 (CPTCHGTG).

This sequence belongs to the DnaJ family. As to quaternary structure, homodimer. The cofactor is Zn(2+).

The protein localises to the cytoplasm. Functionally, participates actively in the response to hyperosmotic and heat shock by preventing the aggregation of stress-denatured proteins and by disaggregating proteins, also in an autonomous, DnaK-independent fashion. Unfolded proteins bind initially to DnaJ; upon interaction with the DnaJ-bound protein, DnaK hydrolyzes its bound ATP, resulting in the formation of a stable complex. GrpE releases ADP from DnaK; ATP binding to DnaK triggers the release of the substrate protein, thus completing the reaction cycle. Several rounds of ATP-dependent interactions between DnaJ, DnaK and GrpE are required for fully efficient folding. Also involved, together with DnaK and GrpE, in the DNA replication of plasmids through activation of initiation proteins. The protein is Chaperone protein DnaJ of Lacticaseibacillus paracasei (strain ATCC 334 / BCRC 17002 / CCUG 31169 / CIP 107868 / KCTC 3260 / NRRL B-441) (Lactobacillus paracasei).